We begin with the raw amino-acid sequence, 824 residues long: Type IV secretion system protein PtlC (824 aa).

456 to 463 (GQSGSGKT) lines the ATP pocket.

Belongs to the TrbE/VirB4 family.

The protein localises to the cell membrane. Component of the type IV secretion system ptl essential for secretion of assembled pertussis toxin (PTX) through the outer membrane. This Bordetella pertussis (strain Tohama I / ATCC BAA-589 / NCTC 13251) protein is Type IV secretion system protein PtlC (ptlC).